Consider the following 333-residue polypeptide: Phosphate acyltransferase (333 aa).

It belongs to the PlsX family. In terms of assembly, homodimer. Probably interacts with PlsY.

Its subcellular location is the cytoplasm. It catalyses the reaction a fatty acyl-[ACP] + phosphate = an acyl phosphate + holo-[ACP]. The protein operates within lipid metabolism; phospholipid metabolism. Catalyzes the reversible formation of acyl-phosphate (acyl-PO(4)) from acyl-[acyl-carrier-protein] (acyl-ACP). This enzyme utilizes acyl-ACP as fatty acyl donor, but not acyl-CoA. This chain is Phosphate acyltransferase, found in Lactobacillus johnsonii (strain CNCM I-12250 / La1 / NCC 533).